The chain runs to 774 residues: Ion-translocating oxidoreductase complex subunit C (774 aa).

4Fe-4S ferredoxin-type domains are found at residues 359–389 (ELPE…QQLH) and 399–428 (QLLA…VQYY). [4Fe-4S] cluster is bound by residues cysteine 369, cysteine 372, cysteine 375, cysteine 379, cysteine 408, cysteine 411, cysteine 414, and cysteine 418. The segment covering 453–490 (EQRQARLRRDEERRAAERAQRAEKAALARAAQAEREEA) has biased composition (basic and acidic residues). A disordered region spans residues 453-493 (EQRQARLRRDEERRAAERAQRAEKAALARAAQAEREEAAPA).

It belongs to the 4Fe4S bacterial-type ferredoxin family. RnfC subfamily. As to quaternary structure, the complex is composed of six subunits: RnfA, RnfB, RnfC, RnfD, RnfE and RnfG. Requires [4Fe-4S] cluster as cofactor.

It is found in the cell inner membrane. Its function is as follows. Part of a membrane-bound complex that couples electron transfer with translocation of ions across the membrane. This chain is Ion-translocating oxidoreductase complex subunit C, found in Pseudomonas aeruginosa (strain ATCC 15692 / DSM 22644 / CIP 104116 / JCM 14847 / LMG 12228 / 1C / PRS 101 / PAO1).